A 411-amino-acid polypeptide reads, in one-letter code: Nuclear receptor subfamily 2 group F member 1-A (411 aa).

Residues 1–68 (MAMVVSVWRD…AGDKGSQNSG (68 aa)) form a disordered region. Residues 24–46 (NPAAQPAREQQQAASAAPHTPQT) are compositionally biased toward low complexity. Positions 73–148 (HIECVVCGDK…VGMRREAVQR (76 aa)) form a DNA-binding region, nuclear receptor. NR C4-type zinc fingers lie at residues 76 to 96 (CVVC…CEGC) and 112 to 136 (CRAN…LKKC). The 227-residue stretch at 174–400 (YLSGYISLLL…TLIRDMLLSG (227 aa)) folds into the NR LBD domain.

This sequence belongs to the nuclear hormone receptor family. NR2 subfamily. In terms of tissue distribution, first expressed in 11-12 hour embryos. In the rostral brain of 13 hour embryos, expressed within the anterior half of the midbrain and the posterior part of the diencephalon. In the presumptive hindbrain, expressed in a segment-like stripe in the anterior region, resembling the presumptive rhombomere units of the hindbrain. Also detected in the intermediate mesoderm, posterior to the first somite. As somitogenesis proceeds, expression extends posteriorly and flanks the 10 most anterior somites. Expression changes extensively both in level and expansion of domains between 13 and 20 hours. In the rostral brain, expression extends to include a major part of the diencephalon and a caudal portion of the telencephalon. Within the hindbrain, strongly expressed in the two most anterior rhombomeres, and a lower but uniform expression is seen to extend throughout rhombomere 7. In 28 hour embryos, higher and more uniform expression is seen in both rostral and hindbrain areas. Also expressed in the retina of the eye.

It is found in the nucleus. In terms of biological role, putative transcription factor that is required in photoreceptor cells precursors during eye development. This chain is Nuclear receptor subfamily 2 group F member 1-A (nr2f1a), found in Danio rerio (Zebrafish).